Consider the following 384-residue polypeptide: Chorismate synthase (384 aa).

Residues Arg-40 and Arg-46 each coordinate NADP(+). Residues 127–129 (RTS), 247–248 (QA), Ala-292, 307–311 (KPIPT), and Arg-333 each bind FMN.

It belongs to the chorismate synthase family. In terms of assembly, homotetramer. It depends on FMNH2 as a cofactor.

It carries out the reaction 5-O-(1-carboxyvinyl)-3-phosphoshikimate = chorismate + phosphate. Its pathway is metabolic intermediate biosynthesis; chorismate biosynthesis; chorismate from D-erythrose 4-phosphate and phosphoenolpyruvate: step 7/7. Functionally, catalyzes the anti-1,4-elimination of the C-3 phosphate and the C-6 proR hydrogen from 5-enolpyruvylshikimate-3-phosphate (EPSP) to yield chorismate, which is the branch point compound that serves as the starting substrate for the three terminal pathways of aromatic amino acid biosynthesis. This reaction introduces a second double bond into the aromatic ring system. In Alkaliphilus oremlandii (strain OhILAs) (Clostridium oremlandii (strain OhILAs)), this protein is Chorismate synthase.